The following is a 693-amino-acid chain: Tegument protein UL47 (693 aa).

Disordered regions lie at residues 1–32 and 48–126; these read MSAREPAGRRRRASTRPRASPVADEPAGDGVG and ELEA…GYLG. A compositionally biased stretch (acidic residues) spans 48–57; sequence ELEALEEMAG. The interval 50-75 is RNA-binding; it reads EALEEMAGDEPPVRRRREGPRARRRR. Residues 63 to 75 carry the Nuclear localization signal motif; that stretch reads RRRREGPRARRRR. The span at 63 to 75 shows a compositional bias: basic residues; the sequence is RRRREGPRARRRR. The Nuclear export signal motif lies at 647–670; sequence SVLGPGVRVVDIMSQFRKLLMGDE.

This sequence belongs to the alphaherpesvirinae HHV-1 UL47 family. Interacts with US3 kinase. Interacts with UL31 and UL34; these interactions seem important for efficient virion nuclear egress. Interacts with UL41/VHS. Phosphorylated by US3. This phosphorylation is required for proper nuclear localization.

The protein localises to the virion tegument. It is found in the host nucleus. Its subcellular location is the host cytoplasm. In terms of biological role, tegument protein that can bind to various RNA transcripts. Plays a role in the attenuation of selective viral and cellular mRNA degradation by modulating the activity of host shutoff RNase UL41/VHS. Also plays a role in the primary envelopment of virions in the perinuclear space, probably by interacting with two nuclear egress proteins UL31 and UL34. In Human herpesvirus 1 (strain F) (HHV-1), this protein is Tegument protein UL47.